A 934-amino-acid chain; its full sequence is Complement component C6 (934 aa).

Residues M1–A21 form the signal peptide. Disulfide bonds link C22–C61, C24–C65, C35–C73, C39–C78, C82–C117, C93–C127, C96–C133, C140–C151, C146–C164, C158–C173, and C180–C218. 2 consecutive TSP type-1 domains span residues C22–P79 and N81–K134. Residue W29 is glycosylated (C-linked (Man) tryptophan). A C-linked (Man) tryptophan; partial glycan is attached at W32. Residue T38 is glycosylated (O-linked (Fuc...) threonine). C-linked (Man) tryptophan; partial glycosylation is present at W90. In terms of domain architecture, LDL-receptor class A spans A138–R175. Ca(2+)-binding residues include L156, N159, E161, D163, D169, and E170. In terms of domain architecture, MACPF spans T176 to Q522. The chain crosses the membrane as a beta stranded span at residues S278–S290. N-linked (GlcNAc...) asparagine glycosylation is present at N324. T392 carries O-linked (Fuc...) threonine glycosylation. Cystine bridges form between C399-C420, C499-C623, C521-C570, C523-C539, C526-C541, C543-C552, C577-C611, C589-C601, C644-C686, C672-C699, C704-C746, C732-C761, C773-C823, C784-C801, C786-C837, and C793-C816. A beta stranded membrane pass occupies residues I402–K415. Residues C523–E553 form the EGF-like domain. The TSP type-1 3 domain maps to D565–T612. W568, W571, and W574 each carry a C-linked (Man) tryptophan; partial glycan. CCP stretches follow at residues C611–P688 and D689–T765. 2 Sushi domains span residues S642–R701 and T702–K763. Residues S642 to A934 form a C5b-binding domain region. Residues L766–G840 form a factor I module (FIM) 1 region. The 60-residue stretch at S780–D839 folds into the Kazal-like 1 domain. N-linked (GlcNAc...) asparagine glycosylation is present at N855. Residues K858–A934 are factor I module (FIM) 2. 5 disulfide bridges follow: C862-C873, C867-C919, C880-C897, C882-C932, and C888-C912. Residues S876 to A934 enclose the Kazal-like 2 domain.

Belongs to the complement C6/C7/C8/C9 family. As to quaternary structure, component of the membrane attack complex (MAC), composed of complement C5b, C6, C7, C8A, C8B, C8G and multiple copies of the pore-forming subunit C9. All cysteine residues are assumed to be cross-linked to one another. Individual modules containing an even number of conserved cysteine residues are supposed to have disulfide linkages only within the same module.

It is found in the secreted. It localises to the target cell membrane. Its activity is regulated as follows. Membrane attack complex (MAC) assembly is inhibited by CD59, thereby protecting self-cells from damage during complement activation. MAC assembly is also inhibited by clusterin (CLU) chaperones that inhibit polymerization of C9. Component of the membrane attack complex (MAC), a multiprotein complex activated by the complement cascade, which inserts into a target cell membrane and forms a pore, leading to target cell membrane rupture and cell lysis. The MAC is initiated by proteolytic cleavage of C5 into complement C5b in response to the classical, alternative, lectin and GZMK complement pathways. The complement pathways consist in a cascade of proteins that leads to phagocytosis and breakdown of pathogens and signaling that strengthens the adaptive immune system. Together with component C5b, involved in MAC complex assembly: complement C5b and C6 associate with the outer leaflet of target cell membrane, reducing the energy for membrane bending. The polypeptide is Complement component C6 (Homo sapiens (Human)).